The sequence spans 243 residues: Cytochrome c1, heme protein (243 aa).

The Mitochondrial intermembrane segment spans residues Gly1–Lys201. The 190-residue stretch at His5–Asn194 folds into the Cytochrome c domain. Positions 39, 40, and 159 each coordinate heme. A helical transmembrane segment spans residues Leu202 to Tyr221. Residues Asn222–Lys243 are Mitochondrial matrix-facing.

It belongs to the cytochrome c family. In terms of assembly, component of the ubiquinol-cytochrome c oxidoreductase (cytochrome b-c1 complex, complex III, CIII), a multisubunit enzyme composed of 3 respiratory subunits cytochrome b, cytochrome c1 and Rieske protein, 2 core protein subunits, and additional low-molecular weight protein subunits. The complex exists as an obligatory dimer and forms supercomplexes (SCs) in the inner mitochondrial membrane with cytochrome c oxidase (complex IV, CIV). Heme is required as a cofactor.

The protein resides in the mitochondrion inner membrane. The catalysed reaction is a quinol + 2 Fe(III)-[cytochrome c](out) = a quinone + 2 Fe(II)-[cytochrome c](out) + 2 H(+)(out). Component of the ubiquinol-cytochrome c oxidoreductase, a multisubunit transmembrane complex that is part of the mitochondrial electron transport chain which drives oxidative phosphorylation. The respiratory chain contains 3 multisubunit complexes succinate dehydrogenase (complex II, CII), ubiquinol-cytochrome c oxidoreductase (cytochrome b-c1 complex, complex III, CIII) and cytochrome c oxidase (complex IV, CIV), that cooperate to transfer electrons derived from NADH and succinate to molecular oxygen, creating an electrochemical gradient over the inner membrane that drives transmembrane transport and the ATP synthase. The cytochrome b-c1 complex catalyzes electron transfer from ubiquinol to cytochrome c, linking this redox reaction to translocation of protons across the mitochondrial inner membrane, with protons being carried across the membrane as hydrogens on the quinol. In the process called Q cycle, 2 protons are consumed from the matrix, 4 protons are released into the intermembrane space and 2 electrons are passed to cytochrome c. Cytochrome c1 is a catalytic core subunit containing a c-type heme. It transfers electrons from the [2Fe-2S] iron-sulfur cluster of the Rieske protein to cytochrome c. The chain is Cytochrome c1, heme protein from Euglena gracilis.